The chain runs to 56 residues: Large ribosomal subunit protein bL33A (56 aa).

Belongs to the bacterial ribosomal protein bL33 family.

The sequence is that of Large ribosomal subunit protein bL33A from Nocardia farcinica (strain IFM 10152).